The sequence spans 1177 residues: Solute carrier family 9 member C1 (1177 aa).

At 1–17 (MAGIFKEFFFSTEDLPE) the chain is on the extracellular side. Residues 18–37 (VILTLSLISSIGAFLNRHLE) traverse the membrane as a helical segment. Residues 38–42 (DFPIP) are Cytoplasmic-facing. Residues 43-60 (VPVILFLLGCSFEVLSFT) traverse the membrane as a helical segment. Topologically, residues 61–76 (SSQVQRYANAIQWMSP) are extracellular. A helical membrane pass occupies residues 77–93 (DLFFRIFTPVVFFTTAF). The Cytoplasmic portion of the chain corresponds to 94 to 103 (DMDTYMLQKL). Residues 104 to 129 (FWQILLISIPGFLVNYILVLWHLASV) traverse the membrane as a helical segment. A transport core domain region spans residues 104–191 (FWQILLISIP…SLITFTSIMD (88 aa)). At 130 to 135 (NQLLLK) the chain is on the extracellular side. A helical transmembrane segment spans residues 136–161 (PTQWLLFSAILVSSDPMLTAAAIRDL). Residues 162–164 (GLS) are Cytoplasmic-facing. A helical membrane pass occupies residues 165–190 (RSLISLINGESLMTSVISLITFTSIM). Topologically, residues 191–204 (DFDQRLQSKRNHTL) are extracellular. The chain crosses the membrane as a helical span at residues 205–236 (AEEIVGGICSYIIASFLFGILSSKLIQFWMST). Over 237-240 (VFGD) the chain is Cytoplasmic. Residues 241 to 262 (DVNHISLIFSILYLIFYICELV) form a helical membrane-spanning segment. The Extracellular segment spans residues 263–265 (GMS). A helical membrane pass occupies residues 266–279 (GIFTLAIVGLLLNS). Over 280–286 (TSFKAAI) the chain is Cytoplasmic. The chain crosses the membrane as a helical span at residues 287 to 319 (EETLLLEFWTFLSRIAFLMVFTFFGLLIPAHTY). Over 320 to 324 (LYIEF) the chain is Extracellular. Residues 325–354 (VDIYYSLNIYLTLIVLRFLTLLLISPVLSR) form a helical membrane-spanning segment. Positions 325–426 (VDIYYSLNIY…FILPVAVTIL (102 aa)) are transport core domain. Over 355–360 (VGHEFS) the chain is Cytoplasmic. Residues 361–391 (WRWIFIMVCSEMKGMPNINMALLLAYSDLYF) traverse the membrane as a helical segment. At 392-395 (GSDK) the chain is on the extracellular side. The chain crosses the membrane as a helical span at residues 396–426 (EKSQILFHGVLVCLITLVVNRFILPVAVTIL). Residues 427–612 (GLRDATSTKY…ICHTIVFTEE (186 aa)) lie on the Cytoplasmic side of the membrane. Residues 598 to 678 (YFFFRICHTI…DFFSHAWNIF (81 aa)) are ion transport-like. A helical transmembrane segment spans residues 613–633 (FEHVGYLVILMNIFPFIISWI). Topologically, residues 634-637 (SQLN) are extracellular. A helical transmembrane segment spans residues 638 to 664 (VIYHSELKHTNYCFLTLYILEALLKIA). Residues 665–671 (AMRKDFF) lie on the Cytoplasmic side of the membrane. A helical transmembrane segment spans residues 672–696 (SHAWNIFELAITLIGILHVILIEID). Topologically, residues 697–704 (TIKYIFNE) are extracellular. A helical transmembrane segment spans residues 705-731 (TEVIVFIKVVQFFRILRIFKLIAPKLL). Over 732 to 1177 (QIIDKRMSHQ…RINLRKVRKE (446 aa)) the chain is Cytoplasmic.

The protein belongs to the monovalent cation:proton antiporter 1 (CPA1) transporter (TC 2.A.36) family. Interacts with soluble adenylyl cyclase (sAC). Sperm.

It is found in the cell projection. The protein localises to the cilium. The protein resides in the flagellum membrane. Functionally, sperm-specific solute carrier involved in intracellular pH regulation of spermatozoa. Required for sperm motility and fertility. Involved in sperm cell hyperactivation, a step needed for sperm motility which is essential late in the preparation of sperm for fertilization. Required for the expression and bicarbonate regulation of the soluble adenylyl cyclase (sAC). The polypeptide is Solute carrier family 9 member C1 (SLC9C1) (Homo sapiens (Human)).